The primary structure comprises 209 residues: Claudin-4 (209 aa).

The Cytoplasmic portion of the chain corresponds to 1 to 9 (MASMGLQVM). The tract at residues 1 to 103 (MASMGLQVMG…GVLLSVVGGK (103 aa)) is interaction with EPHA2. A helical membrane pass occupies residues 10–30 (GIALAVLGWLGAILSCALPMW). Residues 31 to 81 (RVTAFIGSNIVTSQTIWEGLWMNCVVQSTGQMQCKVYDSLLALPQDLQAAR) lie on the Extracellular side of the membrane. Residues Cys-54 and Cys-64 are joined by a disulfide bond. A helical membrane pass occupies residues 82-102 (ALIVICIILAVFGVLLSVVGG). The Cytoplasmic segment spans residues 103 to 117 (KCTNCVDDESSKAKI). A helical membrane pass occupies residues 118-138 (MIVAGVVFLLAGLLVMVPVSW). Topologically, residues 139–160 (TANNVIRDFYNPLVASGQKREM) are extracellular. The chain crosses the membrane as a helical span at residues 161-181 (GASLYVGWAAAGLLILGGALL). Over 182-209 (CFNCPPRNDKPYSAKYSAARSAPASNYV) the chain is Cytoplasmic. Phosphotyrosine; by EPHA2 is present on Tyr-208. The tract at residues 208 to 209 (YV) is interactions with TJP1, TJP2 and TJP3.

Belongs to the claudin family. As to quaternary structure, interacts with EPHA2; phosphorylates CLDN4 and may regulate tight junctions. Directly interacts with TJP1/ZO-1, TJP2/ZO-2 and TJP3/ZO-3. Interacts with CLDN1. Interacts with CLDN8. Phosphorylated. Phosphorylation by EPHA2 is stimulated by EFNA1 and alters interaction with TJP1.

It is found in the cell junction. Its subcellular location is the tight junction. The protein localises to the cell membrane. Its function is as follows. Channel-forming tight junction protein that mediates paracellular chloride transport in the kidney. Plays a critical role in the paracellular reabsorption of filtered chloride in the kidney collecting ducts. Claudins play a major role in tight junction-specific obliteration of the intercellular space, through calcium-independent cell-adhesion activity. The sequence is that of Claudin-4 (CLDN4) from Bos taurus (Bovine).